Consider the following 126-residue polypeptide: Protein ApaG (126 aa).

One can recognise an ApaG domain in the interval 2-126 (DVSQPRIQIQ…FRLAVPNILN (125 aa)).

This Vibrio vulnificus (strain CMCP6) protein is Protein ApaG.